Reading from the N-terminus, the 227-residue chain is PKHD-type hydroxylase BamMC406_4714 (227 aa).

In terms of domain architecture, Fe2OG dioxygenase spans 78 to 178 (KVFPPLFNRY…RVASFFWIQS (101 aa)). Positions 96, 98, and 159 each coordinate Fe cation. R169 contributes to the 2-oxoglutarate binding site.

Requires Fe(2+) as cofactor. L-ascorbate serves as cofactor.

In Burkholderia ambifaria (strain MC40-6), this protein is PKHD-type hydroxylase BamMC406_4714.